The following is a 366-amino-acid chain: 8-hydroxyquercetin 8-O-methyltransferase (366 aa).

Residues valine 207–glycine 210, aspartate 231–leucine 232, aspartate 251–methionine 252, and lysine 265 contribute to the S-adenosyl-L-methionine site. The active-site Proton acceptor is the histidine 269.

It belongs to the class I-like SAM-binding methyltransferase superfamily. Cation-independent O-methyltransferase family. COMT subfamily. In terms of assembly, homodimer.

It carries out the reaction 3,3',4',5,7,8-hexahydroxyflavone + S-adenosyl-L-methionine = 3,3',4',5,7-pentahydroxy-8-methoxyflavone + S-adenosyl-L-homocysteine + H(+). The catalysed reaction is 4',7,8-trihydroxyflavone + S-adenosyl-L-methionine = 4',7-dihydroxy-8-methoxyflavone + S-adenosyl-L-homocysteine + H(+). The enzyme catalyses 8-hydroxy-7-methoxyflavone + S-adenosyl-L-methionine = 7,8-dimethoxyflavone + S-adenosyl-L-homocysteine + H(+). It functions in the pathway flavonoid metabolism. Flavonoid 8-O-methyltransferase involved in the biosynthesis of polymethoxylated flavonoids natural products such as pebrellin, aroma compounds which contribute to the flavor of peppermint, and exhibit pharmacological activities such as anti-allergic, anti-oxidant, antibacterial, anti-proliferative, and anti-inflammatory effects. Catalyzes S-adenosylmethionine-dependent regioselective 8-O-methylation of flavonoids; active on various hydroxylated flavonoid substrates, including 7,8,3'4'-tetrahydroxy-flavone, 7,8,4'-trihydroxy-flavone and 8-hydroxy-flavone 7-methyl ether. In Mentha piperita (Peppermint), this protein is 8-hydroxyquercetin 8-O-methyltransferase.